An 81-amino-acid chain; its full sequence is Large ribosomal subunit protein bL27 (81 aa).

Polar residues predominate over residues 1–11 (MATSKSGGSSK). Residues 1 to 21 (MATSKSGGSSKNGRDSISKRL) form a disordered region.

Belongs to the bacterial ribosomal protein bL27 family.

This chain is Large ribosomal subunit protein bL27, found in Borrelia hermsii (strain HS1 / DAH).